The sequence spans 382 residues: Gibberellin 2-beta-dioxygenase 1 (382 aa).

The Fe2OG dioxygenase domain occupies aspartate 189–proline 321. Tyrosine 199 lines the 2-oxoglutarate pocket. Histidine 241, aspartate 243, and histidine 302 together coordinate Fe cation. 2-oxoglutarate contacts are provided by arginine 312 and serine 314.

Belongs to the iron/ascorbate-dependent oxidoreductase family. GA2OX subfamily. L-ascorbate serves as cofactor. Fe(2+) is required as a cofactor. Expressed in roots, shoot apex, and in the basal region of leaf primordia and young leaves.

The catalysed reaction is gibberellin A1 + 2-oxoglutarate + O2 = gibberellin A8 + succinate + CO2. In terms of biological role, catalyzes the 2-beta-hydroxylation of several biologically active gibberellins, leading to the homeostatic regulation of their endogenous level. Catabolism of gibberellins (GAs) plays a central role in plant development. Controls the level of bioactive GAs in the shoot apical meristem, which regulates the vegetative to reproductive phase transition. In vitro, converts GA1, GA4, GA9, GA20, and GA44 to the corresponding 2-beta-hydroxylated products GA8, GA34, GA51, GA29, and GA98, respectively. This is Gibberellin 2-beta-dioxygenase 1 from Oryza sativa subsp. japonica (Rice).